The following is a 271-amino-acid chain: Regulatory protein RecX (271 aa).

This sequence belongs to the RecX family.

Its subcellular location is the cytoplasm. Modulates RecA activity. The chain is Regulatory protein RecX from Lactobacillus delbrueckii subsp. bulgaricus (strain ATCC 11842 / DSM 20081 / BCRC 10696 / JCM 1002 / NBRC 13953 / NCIMB 11778 / NCTC 12712 / WDCM 00102 / Lb 14).